Reading from the N-terminus, the 528-residue chain is Chaperonin GroEL, chloroplastic (528 aa).

ATP-binding positions include 29 to 32, 86 to 90, glycine 415, 481 to 483, and aspartate 497; these read TLGP, DGTTT, and NAA.

This sequence belongs to the chaperonin (HSP60) family. Forms a cylinder of 14 subunits composed of two heptameric rings stacked back-to-back. Interacts with the co-chaperonin GroES.

It localises to the plastid. The protein localises to the chloroplast. The enzyme catalyses ATP + H2O + a folded polypeptide = ADP + phosphate + an unfolded polypeptide.. Together with its co-chaperonin GroES, plays an essential role in assisting protein folding. The GroEL-GroES system forms a nano-cage that allows encapsulation of the non-native substrate proteins and provides a physical environment optimized to promote and accelerate protein folding. The polypeptide is Chaperonin GroEL, chloroplastic (Trieres chinensis (Marine centric diatom)).